A 400-amino-acid chain; its full sequence is Acetate kinase (400 aa).

N10 is a binding site for Mg(2+). K17 contributes to the ATP binding site. Residue R91 coordinates substrate. D150 functions as the Proton donor/acceptor in the catalytic mechanism. ATP contacts are provided by residues 210–214 (HLGNG), 285–287 (DCR), and 333–337 (GIGEN). Residue E387 participates in Mg(2+) binding.

This sequence belongs to the acetokinase family. As to quaternary structure, homodimer. Mg(2+) is required as a cofactor. The cofactor is Mn(2+).

Its subcellular location is the cytoplasm. The catalysed reaction is acetate + ATP = acetyl phosphate + ADP. Its pathway is metabolic intermediate biosynthesis; acetyl-CoA biosynthesis; acetyl-CoA from acetate: step 1/2. Its function is as follows. Catalyzes the formation of acetyl phosphate from acetate and ATP. Can also catalyze the reverse reaction. The sequence is that of Acetate kinase from Yersinia pseudotuberculosis serotype IB (strain PB1/+).